We begin with the raw amino-acid sequence, 753 residues long: Neuroendocrine convertase 1 (753 aa).

Positions 1 to 27 are cleaved as a signal peptide; the sequence is MEQRGWTLQCTAFAFFCVWCALNSVKA. A propeptide spanning residues 28-110 is cleaved from the precursor; that stretch reads KRQFVNEWAA…QQYEKERSKR (83 aa). A Peptidase S8 domain is found at 129–450; that stretch reads QWYLQDTRMT…FGLLNAKALV (322 aa). Residues D167 and H208 each act as charge relay system in the active site. Disulfide bonds link C225–C374 and C317–C347. S382 acts as the Charge relay system in catalysis. N401 is a glycosylation site (N-linked (GlcNAc...) asparagine). A P/Homo B domain is found at 460 to 597; the sequence is NVPEKKECVV…KLILHGTSSQ (138 aa). C467 and C494 form a disulfide bridge. Residues 633-651 show a composition bias toward polar residues; it reads QKSLNGNLLVPKNSSSSNV. The interval 633-663 is disordered; the sequence is QKSLNGNLLVPKNSSSSNVEGRRDEQVQGTP. N645 is a glycosylation site (N-linked (GlcNAc...) asparagine).

Belongs to the peptidase S8 family. Furin subfamily. The cofactor is Ca(2+).

The protein localises to the cytoplasmic vesicle. Its subcellular location is the secretory vesicle. The catalysed reaction is Release of protein hormones, neuropeptides and renin from their precursors, generally by hydrolysis of -Lys-Arg-|- bonds.. In terms of biological role, involved in the processing of hormone and other protein precursors at sites comprised of pairs of basic amino acid residues. Substrates include POMC, renin, enkephalin, dynorphin, somatostatin, insulin and AGRP. In Mus musculus (Mouse), this protein is Neuroendocrine convertase 1 (Pcsk1).